Consider the following 213-residue polypeptide: ATP-dependent dethiobiotin synthetase BioD (213 aa).

12 to 17 (NVGKTF) is an ATP binding site. Threonine 16 provides a ligand contact to Mg(2+). Lysine 36 is a catalytic residue. Position 40 (serine 40) interacts with substrate. Residues aspartate 53, 110–113 (EGTG), and 170–171 (NQ) contribute to the ATP site. Mg(2+)-binding residues include aspartate 53 and glutamate 110.

It belongs to the dethiobiotin synthetase family. As to quaternary structure, homodimer. The cofactor is Mg(2+).

The protein localises to the cytoplasm. The enzyme catalyses (7R,8S)-7,8-diammoniononanoate + CO2 + ATP = (4R,5S)-dethiobiotin + ADP + phosphate + 3 H(+). It functions in the pathway cofactor biosynthesis; biotin biosynthesis; biotin from 7,8-diaminononanoate: step 1/2. In terms of biological role, catalyzes a mechanistically unusual reaction, the ATP-dependent insertion of CO2 between the N7 and N8 nitrogen atoms of 7,8-diaminopelargonic acid (DAPA, also called 7,8-diammoniononanoate) to form a ureido ring. This Ruthia magnifica subsp. Calyptogena magnifica protein is ATP-dependent dethiobiotin synthetase BioD.